The chain runs to 135 residues: Sex-regulated protein janus-A (135 aa).

Lys37 is a substrate binding site. Residue His63 is the Proton acceptor of the active site. 104–106 is a binding site for substrate; it reads SQG.

This sequence belongs to the janus family.

In terms of biological role, janA and janB regulate somatic sex differentiation. The chain is Sex-regulated protein janus-A (janA) from Drosophila mauritiana (Fruit fly).